The primary structure comprises 72 residues: Mitotic-spindle organizing protein 1 (72 aa).

The protein belongs to the MOZART1 family. Part of the gamma-tubulin complex.

The protein localises to the cytoplasm. It localises to the cytoskeleton. It is found in the microtubule organizing center. The protein resides in the spindle pole body. Functionally, required for gamma-tubulin complex recruitment to the microtubule organizing center (MTOC). The chain is Mitotic-spindle organizing protein 1 from Coccidioides immitis (strain RS) (Valley fever fungus).